The following is a 340-amino-acid chain: Ferrochelatase (340 aa).

The Fe cation site is built by His-189 and Glu-292.

The protein belongs to the ferrochelatase family.

The protein resides in the cytoplasm. The enzyme catalyses heme b + 2 H(+) = protoporphyrin IX + Fe(2+). It functions in the pathway porphyrin-containing compound metabolism; protoheme biosynthesis; protoheme from protoporphyrin-IX: step 1/1. Its function is as follows. Catalyzes the ferrous insertion into protoporphyrin IX. This is Ferrochelatase from Pseudomonas paraeruginosa (strain DSM 24068 / PA7) (Pseudomonas aeruginosa (strain PA7)).